A 550-amino-acid polypeptide reads, in one-letter code: Zinc finger protein 426 (550 aa).

Positions 39-110 (VSFEDVIVDF…KIVFPEWKLQ (72 aa)) constitute a KRAB domain. 11 consecutive C2H2-type zinc fingers follow at residues 219–241 (FECS…QRTH), 274–296 (HRCK…MRTH), 302–324 (YECK…GRTH), 330–352 (YVCS…VRSH), 358–380 (YGCK…IRTH), 386–408 (FVCV…LKLH), 414–436 (CECK…MRTH), 442–464 (YTCK…MRIH), 470–492 (YECK…ERTH), 498–522 (YECK…SHTH), and 528–550 (YKCQ…ERIH).

It is found in the nucleus. Functionally, may be involved in transcriptional regulation. This is Zinc finger protein 426 (Znf426) from Mus musculus (Mouse).